Consider the following 458-residue polypeptide: NADH-quinone oxidoreductase subunit N (458 aa).

14 helical membrane passes run 4–24 (LLPEITLTLIALLGQFFAVII), 30–50 (IISNIIILLCILSIFLTFKYS), 62–82 (GINIGISKSIVLLFTIISMII), 94–114 (LKFEFITLILLSVVGIFVAIS), 118–138 (FLLLFCGMELTALTSYALAGF), 153–173 (FILGSLVSCLSLFGISFIYGF), 194–214 (LGLIIGIVLFLSSIFFKLSSV), 235–255 (FTAASKIGMVIVLLNISKLII), 261–281 (INYNLIKIIAILSMLFGAFGA), 290–310 (LMAYSTILNIGYVLIGVLLHN), 318–338 (LLYILIYAVGSIGFFTCLIML), 361–381 (IAAIISIVMFSMIGIPPLTGF), 397–417 (FILAYCGIFTSVVAAFYYLKV), and 438–458 (LLLINYLVVGFLLLGSFIISF).

The protein belongs to the complex I subunit 2 family. NDH-1 is composed of 14 different subunits. Subunits NuoA, H, J, K, L, M, N constitute the membrane sector of the complex.

The protein resides in the cell inner membrane. It catalyses the reaction a quinone + NADH + 5 H(+)(in) = a quinol + NAD(+) + 4 H(+)(out). In terms of biological role, NDH-1 shuttles electrons from NADH, via FMN and iron-sulfur (Fe-S) centers, to quinones in the respiratory chain. The immediate electron acceptor for the enzyme in this species is believed to be ubiquinone. Couples the redox reaction to proton translocation (for every two electrons transferred, four hydrogen ions are translocated across the cytoplasmic membrane), and thus conserves the redox energy in a proton gradient. The polypeptide is NADH-quinone oxidoreductase subunit N (Rickettsia felis (strain ATCC VR-1525 / URRWXCal2) (Rickettsia azadi)).